The primary structure comprises 608 residues: Serine/arginine repetitive matrix protein 4 (608 aa).

2 disordered regions span residues 34-246 (ASIT…PLPR) and 261-608 (SAAD…STRR). The segment covering 78–100 (GREKACRELDPARAHSASQDRDP) has biased composition (basic and acidic residues). Basic residues-rich tracts occupy residues 107–123 (RGKKKKKKSTRKKRRRS) and 131–187 (VKKK…HRCP). Residues 188–200 (SRSQSSELRSPSC) show a composition bias toward low complexity. Residues 201 to 213 (ESRHRGRSPEEGR) are compositionally biased toward basic and acidic residues. Residues 214–228 (KSRRTHSRRCSKNHC) are compositionally biased toward basic residues. Low complexity predominate over residues 289-299 (TSSPPSTQTSS). Residues 322–339 (CGNTSDSGNSFTTSSPQN) show a composition bias toward polar residues. 2 stretches are compositionally biased toward low complexity: residues 389-420 (RSSSYTSTRSSSPSSRSPNPRASPRYTRSRST) and 428-459 (SRSPSYSSKSGKRSPPSRSSRSRRSPSYSRYS). The span at 460-477 (PSRERDLKYGEKEPQPRE) shows a compositional bias: basic and acidic residues. Residues 478–494 (RARRRRRSYSPMRKRRR) are compositionally biased toward basic residues. A compositionally biased stretch (basic and acidic residues) spans 495–504 (DSPSHLEARR). Low complexity predominate over residues 518-555 (PSPSSSSSLSSASSWYSSSSSSSSSSSRSPSRSYSRSR). The span at 556 to 573 (SPSRSHSSRSQTRSRTRT) shows a compositional bias: basic residues. Residues 574-608 (SRSSSSRSLSLGSRSRSRNRSLSYSSAESYASTRR) show a composition bias toward low complexity.

Belongs to the nSR100 family. In terms of processing, phosphorylated. In terms of tissue distribution, specifically expressed in neuronal cells (at protein level). Expressed in adult nervous system and sensory organ tissues.

Its subcellular location is the nucleus. Splicing factor specifically required for neural cell differentiation. Acts in conjunction with nPTB/PTBP2 by binding directly to its regulated target transcripts and promotes neural-specific exon inclusion in many genes that function in neural cell differentiation. Required to promote the inclusion of neural-specific exon 10 in nPTB/PTBP2, leading to increased expression of neural-specific nPTB/PTBP2. Also promotes the inclusion of exon 16 in DAAM1 in neuron extracts. Promotes alternative splicing of REST transcripts to produce REST isoform 2 (REST4) with greatly reduced repressive activity, thereby activating expression of REST targets in neural cells. Plays an important role during embryonic development as well as in the proper functioning of the adult nervous system. Regulates alternative splicing events in genes with important neuronal functions. In Mus musculus (Mouse), this protein is Serine/arginine repetitive matrix protein 4 (Srrm4).